The chain runs to 81 residues: MVLYALFYVFLVLFIFFDSFKQESNKLELSGKEERKLGNGGDRLTRDFLDPLYEEFEESSSESSDVNFHQVNLSIRICFSF.

This sequence belongs to the ycf70 family.

Its subcellular location is the plastid. It is found in the chloroplast. This is an uncharacterized protein from Saccharum officinarum (Sugarcane).